Reading from the N-terminus, the 617-residue chain is Secretogranin-2 (617 aa).

A signal peptide spans 1–27; it reads MAEAKTHWLGAALSLIPLIFLISGAEA. Residues 28–30 constitute a propeptide that is removed on maturation; the sequence is ASF. Positions 123-147 are disordered; sequence NEPQSVPKENKPHALNSEKNFPIDM. Y151 carries the sulfotyrosine modification. 6 positions are modified to phosphoserine: S174, S268, S432, S532, S555, and S556. The segment at 552–583 is disordered; that stretch reads NQGSSQETDKLAPVSKRFPVGPPKNDDTPNRQ.

It belongs to the chromogranin/secretogranin protein family. In terms of assembly, interacts with Secretogranin III/SCG3.

It is found in the secreted. Its function is as follows. Neuroendocrine protein of the granin family that regulates the biogenesis of secretory granules. This is Secretogranin-2 (SCG2) from Macaca fascicularis (Crab-eating macaque).